Reading from the N-terminus, the 356-residue chain is MPEEKQKKSVLEKALKRIEENFGKGSIMILGDETQVQPVEVIPTGSLAIDIATGVGGYPRGRIVEIFGQESSGKTTLALHAIAEAQKMGGVAAFIDAEHALDPVYAKNLGVDLKSLLISQPDHGEQALEIVDELVRSGVVDLIVVDSVAALVPRAEIEGAMGDMQVGLQARLMSQALRKIAGSVNKSKAVVIFTNQIRMKIGVMFGSPETTTGGLALKFYATMRMEVRRGEPIKEGKDVIGNVISVKIVKNKVAPPFKTAQTYIIYGKGIDREYELFNIAVNEGIVDRKGSWYYYTTLKGEEVSLGQGSSNAVQFLKDNPEIAGEIERRIREKYGLLSVEKEEQRKEKKSSGEEAS.

Residue 68-75 (GQESSGKT) participates in ATP binding.

This sequence belongs to the RecA family.

It is found in the cytoplasm. In terms of biological role, can catalyze the hydrolysis of ATP in the presence of single-stranded DNA, the ATP-dependent uptake of single-stranded DNA by duplex DNA, and the ATP-dependent hybridization of homologous single-stranded DNAs. It interacts with LexA causing its activation and leading to its autocatalytic cleavage. The sequence is that of Protein RecA from Thermotoga maritima (strain ATCC 43589 / DSM 3109 / JCM 10099 / NBRC 100826 / MSB8).